The chain runs to 163 residues: Bacterial microcompartment assembly protein PduM (163 aa).

The protein belongs to the PduM family. As to quaternary structure, interacts with shell protein PduK.

It localises to the bacterial microcompartment. Its pathway is polyol metabolism; 1,2-propanediol degradation. Functionally, plays an essential role in assembly and/or stability of the bacterial microcompartment (BMC) dedicated to 1,2-propanediol (1,2-PD) degradation. Overexpression impairs BMC formation. The 1,2-PD-specific bacterial microcompartment (BMC) concentrates low levels of 1,2-PD catabolic enzymes, concentrates volatile reaction intermediates thus enhancing pathway flux and keeps the level of toxic, mutagenic propionaldehyde low. This Salmonella typhimurium (strain LT2 / SGSC1412 / ATCC 700720) protein is Bacterial microcompartment assembly protein PduM.